The following is a 432-amino-acid chain: CBL-interacting serine/threonine-protein kinase 17 (432 aa).

Residues 11-266 (YELGRTLGEG…IAGIKAHDWF (256 aa)) form the Protein kinase domain. Residues 17–25 (LGEGNSAKV) and K40 contribute to the ATP site. D134 acts as the Proton acceptor in catalysis. The tract at residues 152 to 181 (DFGLSALSQHYREDGLLHTTCGSPNYVAPE) is activation loop. S156 carries the phosphoserine modification. T170 is subject to Phosphothreonine. An NAF domain is found at 301–325 (DSPTIINAFQLIGMSSFLDLSGFFE). Residues 331-360 (ERQIRFTSNSLAKDLLENIETIFTEMGFCL) form a PPI region.

The protein belongs to the protein kinase superfamily. CAMK Ser/Thr protein kinase family. SNF1 subfamily. As to quaternary structure, interacts with CBL1. Requires Mn(2+) as cofactor.

The catalysed reaction is L-seryl-[protein] + ATP = O-phospho-L-seryl-[protein] + ADP + H(+). It carries out the reaction L-threonyl-[protein] + ATP = O-phospho-L-threonyl-[protein] + ADP + H(+). In terms of biological role, CIPK serine-threonine protein kinases interact with CBL proteins. Binding of a CBL protein to the regulatory NAF domain of CIPK protein lead to the activation of the kinase in a calcium-dependent manner. In Arabidopsis thaliana (Mouse-ear cress), this protein is CBL-interacting serine/threonine-protein kinase 17 (CIPK17).